Reading from the N-terminus, the 234-residue chain is Sugar fermentation stimulation protein A (234 aa).

Residues 201–220 (LLSEAQQRGVEILAYKAEIS) constitute a DNA-binding region (H-T-H motif).

It belongs to the SfsA family.

Binds to DNA non-specifically. Could be a regulatory factor involved in maltose metabolism. The chain is Sugar fermentation stimulation protein A from Shigella sonnei (strain Ss046).